Reading from the N-terminus, the 232-residue chain is tRNA (guanine-N(1)-)-methyltransferase (232 aa).

S-adenosyl-L-methionine-binding positions include glycine 112 and 132-137 (IGDYIL).

Belongs to the RNA methyltransferase TrmD family. In terms of assembly, homodimer.

The protein localises to the cytoplasm. The enzyme catalyses guanosine(37) in tRNA + S-adenosyl-L-methionine = N(1)-methylguanosine(37) in tRNA + S-adenosyl-L-homocysteine + H(+). Specifically methylates guanosine-37 in various tRNAs. This chain is tRNA (guanine-N(1)-)-methyltransferase, found in Methylacidiphilum infernorum (isolate V4) (Methylokorus infernorum (strain V4)).